A 328-amino-acid polypeptide reads, in one-letter code: NADH-quinone oxidoreductase subunit H 1 (328 aa).

8 consecutive transmembrane segments (helical) span residues 11–31 (VVKA…FLLF), 81–101 (LAPV…PWAP), 116–136 (VLVI…GGWA), 154–174 (ISYE…TGSV), 189–209 (LFPQ…EAGW), 235–257 (GLFF…TFFL), 269–289 (IPGF…LYWI), and 308–328 (VLLP…ALWA).

The protein belongs to the complex I subunit 1 family. NDH-1 is composed of 14 different subunits. Subunits NuoA, H, J, K, L, M, N constitute the membrane sector of the complex.

The protein localises to the cell membrane. It carries out the reaction a quinone + NADH + 5 H(+)(in) = a quinol + NAD(+) + 4 H(+)(out). In terms of biological role, NDH-1 shuttles electrons from NADH, via FMN and iron-sulfur (Fe-S) centers, to quinones in the respiratory chain. The immediate electron acceptor for the enzyme in this species is believed to be ubiquinone. Couples the redox reaction to proton translocation (for every two electrons transferred, four hydrogen ions are translocated across the cytoplasmic membrane), and thus conserves the redox energy in a proton gradient. This subunit may bind ubiquinone. This chain is NADH-quinone oxidoreductase subunit H 1, found in Symbiobacterium thermophilum (strain DSM 24528 / JCM 14929 / IAM 14863 / T).